A 775-amino-acid polypeptide reads, in one-letter code: Zinc finger protein GLIS3 (775 aa).

2 disordered regions span residues 121-147 (TESS…KKRA) and 282-314 (PGST…AHLH). Over residues 123–133 (SSHSPYPSPRH) the composition is skewed to low complexity. Residues 134–147 (SSTRSHSARSKKRA) are compositionally biased toward basic residues. Residues 289–307 (PPAPPLPPLPPPPGPPPPY) are compositionally biased toward pro residues. A C2H2-type 1 zinc finger spans residues 345-370 (HCCRWIDCSALYDQQEELVRHIEKVH). The segment at 379–406 (FTCFWAGCPRRYKPFNARYKLLIHMRVH) adopts a C2H2-type 2; atypical zinc-finger fold. 3 C2H2-type zinc fingers span residues 412–436 (NKCT…LRSH), 442–466 (YLCQ…QRTH), and 472–496 (YACQ…VKAH). Disordered stretches follow at residues 485–512 (DPSS…SSTE) and 529–665 (PATS…QPNG). Residues 491–507 (KHVKAHSSKEQQARKKL) carry the Bipartite nuclear localization signal motif. Positions 497 to 512 (SSKEQQARKKLRSSTE) are enriched in basic and acidic residues. 3 stretches are compositionally biased toward polar residues: residues 557-567 (IFSSNYSSRSG), 588-600 (VQGS…SQLP), and 632-663 (SILQ…SFQP).

It belongs to the GLI C2H2-type zinc-finger protein family. As to expression, in the adult, expressed at high levels in the kidney and at lower levels in the brain, skeletal muscle, pancreas, liver, lung, thymus and ovary.

It localises to the nucleus. In terms of biological role, acts both as a repressor and an activator of transcription. Binds to the consensus sequence 5'-GACCACCCAC-3'. This chain is Zinc finger protein GLIS3 (GLIS3), found in Homo sapiens (Human).